The chain runs to 292 residues: Elongation factor Ts (292 aa).

The segment at 80-83 (TDFV) is involved in Mg(2+) ion dislocation from EF-Tu.

The protein belongs to the EF-Ts family.

The protein localises to the cytoplasm. In terms of biological role, associates with the EF-Tu.GDP complex and induces the exchange of GDP to GTP. It remains bound to the aminoacyl-tRNA.EF-Tu.GTP complex up to the GTP hydrolysis stage on the ribosome. This Cupriavidus metallidurans (strain ATCC 43123 / DSM 2839 / NBRC 102507 / CH34) (Ralstonia metallidurans) protein is Elongation factor Ts.